The following is a 1131-amino-acid chain: Probable pre-mRNA-splicing factor ATP-dependent RNA helicase mog-1 (1131 aa).

6 stretches are compositionally biased toward basic and acidic residues: residues 1–12 (MSDKRADGRLEG), 65–122 (RGVT…DRSG), 139–148 (WDQDDREGSS), 160–173 (RGERDRKRYMDSER), 180–225 (RSER…WEEE), and 407–416 (GNYKESHQFA). Disordered regions lie at residues 1–225 (MSDK…WEEE) and 389–416 (MGVKEKKDETADPEDDDSGNYKESHQFA). The Helicase ATP-binding domain occupies 451-614 (MNVIRENNVV…FGGNCPTFTI (164 aa)). 464–471 (GETGSGKT) contacts ATP. Residues 561 to 564 (DEAH) carry the DEAH box motif. The region spanning 629 to 812 (PVEDYVDAAV…NVVLLLKSLG (184 aa)) is the Helicase C-terminal domain. Composition is skewed to basic and acidic residues over residues 1085–1114 (EMREAQKEMERRKEESDKAFKRPESSRRVV) and 1121–1131 (ARSERRKLWGL). Residues 1085-1131 (EMREAQKEMERRKEESDKAFKRPESSRRVVEVGSKSARSERRKLWGL) are disordered.

Belongs to the DEAD box helicase family. DEAH subfamily. PRP16 sub-subfamily.

The protein localises to the nucleus. The enzyme catalyses ATP + H2O = ADP + phosphate + H(+). Functionally, probable ATP-binding RNA helicase involved in pre-mRNA splicing. The protein is Probable pre-mRNA-splicing factor ATP-dependent RNA helicase mog-1 (mog-1) of Caenorhabditis elegans.